A 426-amino-acid polypeptide reads, in one-letter code: Tyrosine--tRNA ligase (426 aa).

Tyrosine 38 serves as a coordination point for L-tyrosine. The short motif at 43-52 (PTADSLHIGS) is the 'HIGH' region element. L-tyrosine-binding residues include tyrosine 176 and glutamine 180. The 'KMSKS' region signature appears at 236-240 (KFGKT). Residue lysine 239 coordinates ATP. The region spanning 359 to 426 (QTIVEVLTQS…KKLFNLYIWK (68 aa)) is the S4 RNA-binding domain.

The protein belongs to the class-I aminoacyl-tRNA synthetase family. TyrS type 1 subfamily. In terms of assembly, homodimer.

It is found in the cytoplasm. The catalysed reaction is tRNA(Tyr) + L-tyrosine + ATP = L-tyrosyl-tRNA(Tyr) + AMP + diphosphate + H(+). Functionally, catalyzes the attachment of tyrosine to tRNA(Tyr) in a two-step reaction: tyrosine is first activated by ATP to form Tyr-AMP and then transferred to the acceptor end of tRNA(Tyr). This chain is Tyrosine--tRNA ligase, found in Aliivibrio salmonicida (strain LFI1238) (Vibrio salmonicida (strain LFI1238)).